We begin with the raw amino-acid sequence, 282 residues long: Small ribosomal subunit protein uS3 (282 aa).

A KH type-2 domain is found at 43 to 111; sequence IRQLMSTGME…QVQLNILEVK (69 aa). Residues 218–282 are disordered; it reads QQAASAPSRG…AAVATEGSDA (65 aa). Residues 230–262 are compositionally biased toward basic and acidic residues; the sequence is PRRDGDDRGPRRENSGPRRDGGNLRSQRNDRNE. Residues 263 to 276 show a composition bias toward low complexity; the sequence is NAAVEAAPAAAAVA.

This sequence belongs to the universal ribosomal protein uS3 family. Part of the 30S ribosomal subunit. Forms a tight complex with proteins S10 and S14.

Functionally, binds the lower part of the 30S subunit head. Binds mRNA in the 70S ribosome, positioning it for translation. The sequence is that of Small ribosomal subunit protein uS3 from Renibacterium salmoninarum (strain ATCC 33209 / DSM 20767 / JCM 11484 / NBRC 15589 / NCIMB 2235).